We begin with the raw amino-acid sequence, 189 residues long: Small ribosomal subunit protein uS7 (189 aa).

Belongs to the universal ribosomal protein uS7 family. Part of the 30S ribosomal subunit.

In terms of biological role, one of the primary rRNA binding proteins, it binds directly to 16S rRNA where it nucleates assembly of the head domain of the 30S subunit. Is located at the subunit interface close to the decoding center. In Methanosarcina mazei (strain ATCC BAA-159 / DSM 3647 / Goe1 / Go1 / JCM 11833 / OCM 88) (Methanosarcina frisia), this protein is Small ribosomal subunit protein uS7.